Here is an 89-residue protein sequence, read N- to C-terminus: Cell division protein FtsL (89 aa).

The Cytoplasmic segment spans residues 1–22 (MIDRKHYHLVGSIGKDILNNGK). The chain crosses the membrane as a helical span at residues 23–40 (LPALLLIAVLASSSLVVI). Residues 41 to 89 (TTYQTRRLTVEREQLLLEQNILDIEWRNLILEDNVISDQSRFEFVATEQ) lie on the Periplasmic side of the membrane.

This sequence belongs to the FtsL family. As to quaternary structure, part of a complex composed of FtsB, FtsL and FtsQ.

The protein resides in the cell inner membrane. Functionally, essential cell division protein. May link together the upstream cell division proteins, which are predominantly cytoplasmic, with the downstream cell division proteins, which are predominantly periplasmic. This is Cell division protein FtsL from Moranella endobia (strain PCIT).